The chain runs to 136 residues: Translation initiation factor 5A (136 aa).

Lys38 carries the post-translational modification Hypusine.

Belongs to the eIF-5A family.

Its subcellular location is the cytoplasm. Functionally, functions by promoting the formation of the first peptide bond. This Methanopyrus kandleri (strain AV19 / DSM 6324 / JCM 9639 / NBRC 100938) protein is Translation initiation factor 5A.